A 208-amino-acid polypeptide reads, in one-letter code: Small ribosomal subunit protein eS8 (208 aa).

The disordered stretch occupies residues 1 to 37 (MGISRDNWHKRRKTGGKRKPYHKKRKYEPGRPAANTK). Over residues 8 to 26 (WHKRRKTGGKRKPYHKKRK) the composition is skewed to basic residues.

It belongs to the eukaryotic ribosomal protein eS8 family. As to quaternary structure, component of the small ribosomal subunit. Identified in a IGF2BP1-dependent mRNP granule complex containing untranslated mRNAs. Part of the small subunit (SSU) processome, composed of more than 70 proteins and the RNA chaperone small nucleolar RNA (snoRNA) U3.

It is found in the cytoplasm. The protein resides in the membrane. It localises to the nucleus. Its subcellular location is the nucleolus. In terms of biological role, component of the small ribosomal subunit. The ribosome is a large ribonucleoprotein complex responsible for the synthesis of proteins in the cell. Part of the small subunit (SSU) processome, first precursor of the small eukaryotic ribosomal subunit. During the assembly of the SSU processome in the nucleolus, many ribosome biogenesis factors, an RNA chaperone and ribosomal proteins associate with the nascent pre-rRNA and work in concert to generate RNA folding, modifications, rearrangements and cleavage as well as targeted degradation of pre-ribosomal RNA by the RNA exosome. The sequence is that of Small ribosomal subunit protein eS8 (rps8) from Xenopus laevis (African clawed frog).